Consider the following 545-residue polypeptide: Glucose-6-phosphate isomerase (545 aa).

E351 serves as the catalytic Proton donor. Residues H382 and K510 contribute to the active site.

Belongs to the GPI family.

It is found in the cytoplasm. It catalyses the reaction alpha-D-glucose 6-phosphate = beta-D-fructose 6-phosphate. The protein operates within carbohydrate biosynthesis; gluconeogenesis. It functions in the pathway carbohydrate degradation; glycolysis; D-glyceraldehyde 3-phosphate and glycerone phosphate from D-glucose: step 2/4. Its function is as follows. Catalyzes the reversible isomerization of glucose-6-phosphate to fructose-6-phosphate. This chain is Glucose-6-phosphate isomerase, found in Shewanella sp. (strain ANA-3).